Here is a 282-residue protein sequence, read N- to C-terminus: MAMIIDGKRISGEIKDELKAEVSELKSQGKEVTLAVIQVGTDPASTVYVGNKKKACEYCGIRSLAYELPLETTEEELLNLINELNDRDDVTGILVQLPLPDHIEENKVIKTIDPKKDVDGFHPESVGALSIGQAGYLSCTPAGIVQLLKRSGIEIEGKECVVLGRSNIVGKPMALLLLRENGTVTICHSKTKNLSEITKRADILVVAIGKPRFLTKEYVKDGAVVIDVGMHRDENNKLCGDVDYDDVVDKVSAITPVPGGVGPMTIAMLMNNCVYGAKKFQI.

NADP(+) contacts are provided by residues 164–166 (GRS) and Ser189.

The protein belongs to the tetrahydrofolate dehydrogenase/cyclohydrolase family. Homodimer.

It catalyses the reaction (6R)-5,10-methylene-5,6,7,8-tetrahydrofolate + NADP(+) = (6R)-5,10-methenyltetrahydrofolate + NADPH. It carries out the reaction (6R)-5,10-methenyltetrahydrofolate + H2O = (6R)-10-formyltetrahydrofolate + H(+). It functions in the pathway one-carbon metabolism; tetrahydrofolate interconversion. Functionally, catalyzes the oxidation of 5,10-methylenetetrahydrofolate to 5,10-methenyltetrahydrofolate and then the hydrolysis of 5,10-methenyltetrahydrofolate to 10-formyltetrahydrofolate. This is Bifunctional protein FolD from Lachnoclostridium phytofermentans (strain ATCC 700394 / DSM 18823 / ISDg) (Clostridium phytofermentans).